Consider the following 447-residue polypeptide: MNAWEVNFDGLVGLTHHYAGLSFGNEASTRHRFQSSNPRLAAKQGLLKMKNLADAGFPQAVIPPHERPFIPVLRQLGFSGSDEHVLEKVARQAPHWLSSVSSASPMWVANAATIAPSADTLDGKVHLTVANLNNKFHRSLEAPVTESLLKAIFDDEEKFSVHSALPQVALLGDEGAANHNRLGGHYGEPGMQLFVYGREEGNDTRPSRYPARQTREASEAVARLNQVNPQQVIFAQQNPDVIDQGVFHNDVIAVSNRQVLFCHQQAFARQSQLLASLRARVNGFMAIEVPATHVSVSDAVSTYLFNSQLLSRDDGSMMLVLPQECREHAGVWGYLNELLAADNPISELKVFDLRESMANGGGPACLRLRVVLTEEERRAVNPAVMMNDTLFNALNDWVDRYYRDRLTAADLADPQLLREGREALDVLSQLLNLGSVYPFQREGGGNG.

Substrate-binding positions include Ala-19–Ser-28, Asn-110, and His-137–Arg-138. Glu-174 is a catalytic residue. Arg-212 provides a ligand contact to substrate. His-248 is an active-site residue. The substrate site is built by Asp-250 and Asn-359. Cys-365 (nucleophile) is an active-site residue.

This sequence belongs to the succinylarginine dihydrolase family. Homodimer.

The enzyme catalyses N(2)-succinyl-L-arginine + 2 H2O + 2 H(+) = N(2)-succinyl-L-ornithine + 2 NH4(+) + CO2. The protein operates within amino-acid degradation; L-arginine degradation via AST pathway; L-glutamate and succinate from L-arginine: step 2/5. In terms of biological role, catalyzes the hydrolysis of N(2)-succinylarginine into N(2)-succinylornithine, ammonia and CO(2). The polypeptide is N-succinylarginine dihydrolase (Escherichia coli O7:K1 (strain IAI39 / ExPEC)).